Consider the following 553-residue polypeptide: General alpha-glucoside permease (553 aa).

A compositionally biased stretch (polar residues) spans 1-21 (MSVDENQLENGQLLSSENEAS). The disordered stretch occupies residues 1–26 (MSVDENQLENGQLLSSENEASSPFKE). At 1–33 (MSVDENQLENGQLLSSENEASSPFKESIPSRSS) the chain is on the cytoplasmic side. The chain crosses the membrane as a helical span at residues 34 to 54 (LYLIALTVSLLGVQLTWSVEL). Residues 55–72 (GYGTPYLFSLGLRKEWTS) lie on the Extracellular side of the membrane. Residues 73 to 93 (IIWIAGPLTGILIQPIAGILS) traverse the membrane as a helical segment. Over 94-111 (DRVNSRIGRRRPFMLCAS) the chain is Cytoplasmic. The chain crosses the membrane as a helical span at residues 112–132 (LLGTFSLFLMGWAPDICLFIF). Residues 133–140 (SNEVLMKR) are Extracellular-facing. The helical transmembrane segment at 141-161 (VTIVLATISIYLLDVAVNVVM) threads the bilayer. Residues 162–186 (ASTRSLIVDSVRSDQQHEANSWAGR) are Cytoplasmic-facing. Residues 187–207 (MIGVGNVLGYLLGYLPLYRIF) form a helical membrane-spanning segment. At 208–216 (SFLNFTQLQ) the chain is on the extracellular side. The helical transmembrane segment at 217–237 (VFCVLASISLVLTVTITTIFV) threads the bilayer. The Cytoplasmic portion of the chain corresponds to 238–280 (SERRFPPVEHEKSVAGEIFEFFTTMRQSITALPFTLKRICFVQ). Residues 281–301 (FFAYFGWFPFLFYITTYVGIL) form a helical membrane-spanning segment. Topologically, residues 302-322 (YLRHAPKGHEEDWDMATRQGS) are extracellular. The chain crosses the membrane as a helical span at residues 323 to 343 (FALLLFAIISLAANTALPLLL). Topologically, residues 344 to 424 (EDTEDDEEDE…SKVQIKGLTL (81 aa)) are cytoplasmic. The interval 368-399 (NDLGNIRTGTNTPRLGNLSETTSFRSENEPSR) is disordered. Polar residues predominate over residues 374–392 (RTGTNTPRLGNLSETTSFR). Residues 425 to 445 (PILWLSSHVLFGVCMLSTIFL) traverse the membrane as a helical segment. Residues 446–452 (QTSWQAQ) lie on the Extracellular side of the membrane. Residues 453–473 (AMVAICGLSWACTLWIPYSLF) form a helical membrane-spanning segment. Residues 474–494 (SSEIGKLGLRESSGKMIGVHN) are Cytoplasmic-facing. Residues 495 to 515 (VFISAPQVLSTIIATIVFIQS) form a helical membrane-spanning segment. Topologically, residues 516–521 (EGSHRD) are extracellular. A helical transmembrane segment spans residues 522 to 542 (IADNSIAWVLRIGGISAFLAA). Residues 543 to 553 (YQCRHLLPINF) lie on the Cytoplasmic side of the membrane.

It belongs to the glycoside-pentoside-hexuronide (GPH) cation symporter transporter (TC 2.A.2.4) family.

The protein localises to the membrane. Its function is as follows. Responsible for the transport of maltose and sucrose into the cell, with the concomitant uptake of protons (symport system). The sequence is that of General alpha-glucoside permease (sut1) from Schizosaccharomyces pombe (strain 972 / ATCC 24843) (Fission yeast).